The primary structure comprises 252 residues: Iron-sulfur cluster co-chaperone protein HscB homolog (252 aa).

The N-terminal 59 residues, 1-59 (MKKTKTMVASISTLIRRTYPSTNQCNSLATIQSQTQLPRESLQHHSSAEGRLRFSGRVF), are a transit peptide targeting the mitochondrion. The region spanning 93–165 (DYFQIFGLEK…LSRAMYIMKL (73 aa)) is the J domain.

The protein belongs to the HscB family. Interacts with ISU1 and HSP70-9/HSCA1.

The protein localises to the mitochondrion. The protein resides in the cytoplasm. It localises to the cytosol. Functionally, co-chaperone required for the assembly of iron-sulfur [Fe-S] clusters in both mitochondria and cytosol. Required for the activity of iron-sulfur proteins such as aconitase and succinate dehydrogenase. Involved in iron homeostasis and may take part in the control of iron translocation from roots to shoots. This chain is Iron-sulfur cluster co-chaperone protein HscB homolog, found in Arabidopsis thaliana (Mouse-ear cress).